The following is a 127-amino-acid chain: Secreted RxLR effector protein 3 (127 aa).

The N-terminal stretch at 1 to 20 (MRPPLLLFLTVTVLVSCASA) is a signal peptide. The RxLR-dEER motif lies at 30–48 (RSLRSIKTTTNDDAAEEER).

It belongs to the RxLR effector family.

It localises to the secreted. The protein resides in the host cell. In terms of biological role, secreted effector that partially suppresses elicitor-induced cell death in host and enhances virulence of P.parasitica. The protein is Secreted RxLR effector protein 3 of Phytophthora nicotianae (Potato buckeye rot agent).